The primary structure comprises 242 residues: MRCFKATIAYDGAYFLGYAKQPDKLGVQDKIESALNLLGIKSVVIAAGRTDKGVHANNQVLSFHAQKHWSADKLFYYLAPKLAPHIVLKKLEEKNFHARFDAQKRAYRYLLTKSLKTPFLAPYIACGDYGSLDSLNTALKQFIGKHDFSMFKKEGGAATNPKRIIFNAFAYKASIMGHECVVFKIIGDAFLRSSVRLIMQACVQYSLEKITLAEIKTQINNIKATIRTPIMANGLYLHRVHY.

Aspartate 51 (nucleophile) is an active-site residue. Tyrosine 107 serves as a coordination point for substrate.

It belongs to the tRNA pseudouridine synthase TruA family. Homodimer.

The enzyme catalyses uridine(38/39/40) in tRNA = pseudouridine(38/39/40) in tRNA. Functionally, formation of pseudouridine at positions 38, 39 and 40 in the anticodon stem and loop of transfer RNAs. In Helicobacter acinonychis (strain Sheeba), this protein is tRNA pseudouridine synthase A.